Here is a 302-residue protein sequence, read N- to C-terminus: Quinolinate synthase (302 aa).

Residues His-25 and Ser-42 each coordinate iminosuccinate. [4Fe-4S] cluster is bound at residue Cys-87. Residues 113–115 and Ser-130 contribute to the iminosuccinate site; that span reads YVN. [4Fe-4S] cluster is bound at residue Cys-172. Iminosuccinate contacts are provided by residues 198 to 200 and Thr-215; that span reads HPE. [4Fe-4S] cluster is bound at residue Cys-260.

Belongs to the quinolinate synthase family. Type 2 subfamily. Requires [4Fe-4S] cluster as cofactor.

It is found in the cytoplasm. The catalysed reaction is iminosuccinate + dihydroxyacetone phosphate = quinolinate + phosphate + 2 H2O + H(+). It participates in cofactor biosynthesis; NAD(+) biosynthesis; quinolinate from iminoaspartate: step 1/1. Functionally, catalyzes the condensation of iminoaspartate with dihydroxyacetone phosphate to form quinolinate. The polypeptide is Quinolinate synthase (Methanoregula boonei (strain DSM 21154 / JCM 14090 / 6A8)).